The sequence spans 200 residues: Large ribosomal subunit protein uL4 (200 aa).

Positions 43–71 (RAQKTRAEVSGSGKKPWRQKGTGRARSGD) are disordered.

Belongs to the universal ribosomal protein uL4 family. As to quaternary structure, part of the 50S ribosomal subunit.

In terms of biological role, one of the primary rRNA binding proteins, this protein initially binds near the 5'-end of the 23S rRNA. It is important during the early stages of 50S assembly. It makes multiple contacts with different domains of the 23S rRNA in the assembled 50S subunit and ribosome. Its function is as follows. Forms part of the polypeptide exit tunnel. This Actinobacillus pleuropneumoniae serotype 5b (strain L20) protein is Large ribosomal subunit protein uL4.